The chain runs to 195 residues: Putative C-P lyase subunit protein HtxG (195 aa).

This sequence belongs to the PhnH family.

Belongs to an operon involved in hypophosphite oxidation. Exact function not known. The protein is Putative C-P lyase subunit protein HtxG (htxG) of Stutzerimonas stutzeri (Pseudomonas stutzeri).